Consider the following 283-residue polypeptide: uncharacterized protein (283 aa).

Positions 1–25 are cleaved as a signal peptide; the sequence is MNKKRLLFRTPLDALFLLFGTALSA. A lipid anchor (N-palmitoyl cysteine) is attached at cysteine 26. Cysteine 26 carries the S-diacylglycerol cysteine lipid modification.

Belongs to the MG439/MG440 family.

The protein resides in the cell membrane. This is an uncharacterized protein from Mycoplasma pneumoniae (strain ATCC 29342 / M129 / Subtype 1) (Mycoplasmoides pneumoniae).